Here is a 169-residue protein sequence, read N- to C-terminus: Protein ORFb in retron Ec67 (169 aa).

The polypeptide is Protein ORFb in retron Ec67 (Escherichia coli).